We begin with the raw amino-acid sequence, 403 residues long: Tryptophan synthase beta chain (403 aa).

Residue Lys88 is modified to N6-(pyridoxal phosphate)lysine.

Belongs to the TrpB family. Tetramer of two alpha and two beta chains. Pyridoxal 5'-phosphate is required as a cofactor.

It carries out the reaction (1S,2R)-1-C-(indol-3-yl)glycerol 3-phosphate + L-serine = D-glyceraldehyde 3-phosphate + L-tryptophan + H2O. It functions in the pathway amino-acid biosynthesis; L-tryptophan biosynthesis; L-tryptophan from chorismate: step 5/5. In terms of biological role, the beta subunit is responsible for the synthesis of L-tryptophan from indole and L-serine. This chain is Tryptophan synthase beta chain, found in Shewanella frigidimarina (strain NCIMB 400).